We begin with the raw amino-acid sequence, 602 residues long: Elongation factor 4 (602 aa).

The region spanning 7–189 (KKIRNFSIIA…SIVKNVPSPK (183 aa)) is the tr-type G domain. GTP is bound by residues 19-24 (DHGKST) and 136-139 (NKID).

It belongs to the TRAFAC class translation factor GTPase superfamily. Classic translation factor GTPase family. LepA subfamily.

Its subcellular location is the cell membrane. It carries out the reaction GTP + H2O = GDP + phosphate + H(+). Required for accurate and efficient protein synthesis under certain stress conditions. May act as a fidelity factor of the translation reaction, by catalyzing a one-codon backward translocation of tRNAs on improperly translocated ribosomes. Back-translocation proceeds from a post-translocation (POST) complex to a pre-translocation (PRE) complex, thus giving elongation factor G a second chance to translocate the tRNAs correctly. Binds to ribosomes in a GTP-dependent manner. In Alkaliphilus oremlandii (strain OhILAs) (Clostridium oremlandii (strain OhILAs)), this protein is Elongation factor 4.